We begin with the raw amino-acid sequence, 207 residues long: Large ribosomal subunit protein uL4 (207 aa).

It belongs to the universal ribosomal protein uL4 family. In terms of assembly, part of the 50S ribosomal subunit.

One of the primary rRNA binding proteins, this protein initially binds near the 5'-end of the 23S rRNA. It is important during the early stages of 50S assembly. It makes multiple contacts with different domains of the 23S rRNA in the assembled 50S subunit and ribosome. In terms of biological role, forms part of the polypeptide exit tunnel. The sequence is that of Large ribosomal subunit protein uL4 from Rickettsia conorii (strain ATCC VR-613 / Malish 7).